We begin with the raw amino-acid sequence, 329 residues long: uncharacterized protein (329 aa).

A run of 7 helical transmembrane segments spans residues Ile29 to His49, Val78 to Gly98, Lys120 to Val140, Trp164 to Leu184, Tyr217 to Ile237, Phe260 to Val280, and Gly299 to Ile319.

It to M.pneumoniae MPN_129.

It localises to the cell membrane. This is an uncharacterized protein from Mycoplasma pneumoniae (strain ATCC 29342 / M129 / Subtype 1) (Mycoplasmoides pneumoniae).